The sequence spans 179 residues: MATSTISAPSSVRNVILTGFMGTGKSSVGRLLAHRLGFRYCDLDALIVEGEGVSINEIFARHGEPHFRALETEAVRSVSREERCVVSTGGGAVISPENRCLLRKAGVVVNLTATVEEVCRRLREETDRPLLKDDRSGERIAAMMAEREQFYADAELRIDTTGKSVEDVVAEITGYLEGR.

22–27 (GTGKSS) is an ATP binding site. A Mg(2+)-binding site is contributed by Ser26. 3 residues coordinate substrate: Asp44, Arg68, and Gly90. Arg128 provides a ligand contact to ATP. Arg147 provides a ligand contact to substrate.

Belongs to the shikimate kinase family. In terms of assembly, monomer. Mg(2+) is required as a cofactor.

It is found in the cytoplasm. The enzyme catalyses shikimate + ATP = 3-phosphoshikimate + ADP + H(+). The protein operates within metabolic intermediate biosynthesis; chorismate biosynthesis; chorismate from D-erythrose 4-phosphate and phosphoenolpyruvate: step 5/7. Its function is as follows. Catalyzes the specific phosphorylation of the 3-hydroxyl group of shikimic acid using ATP as a cosubstrate. This Geobacter metallireducens (strain ATCC 53774 / DSM 7210 / GS-15) protein is Shikimate kinase.